The sequence spans 345 residues: Serine proteinase inhibitor 2 (345 aa).

It belongs to the serpin family. Poxviruses subfamily.

It is found in the host cytoplasm. Its function is as follows. Viral serpin that inhibits both cysteine and serine proteinases involved in the regulation of host inflammatory and apoptosis processes. Major anti-apoptotic protein which inhibits both intrinsic and extrinsic pathways and strongly cleaves host CASP1 and CASP8 but is a rather poor inhibitor of host CASP3. Prevents the proteolytic activity of host interleukin-1-beta converting enzyme (ICE) and ICE-like enzymes. Can also block apoptosis through host tumor necrosis factor (TNF) receptor. The inhibition of host ICE is an example of a 'cross-class' interaction, in which a serpin inhibits a non-serine proteinase. Also inhibits granzyme B. The protein is Serine proteinase inhibitor 2 (OPG199) of Vaccinia virus (strain Western Reserve) (VACV).